Reading from the N-terminus, the 390-residue chain is S-adenosylmethionine synthase 4 (390 aa).

Residue glutamate 9 coordinates Mg(2+). Histidine 15 lines the ATP pocket. Glutamate 43 serves as a coordination point for K(+). Residues glutamate 56 and glutamine 99 each contribute to the L-methionine site. ATP is bound by residues 167 to 169 (DGK), 235 to 238 (SGRF), aspartate 246, 252 to 253 (RK), alanine 269, lysine 273, and lysine 277. Aspartate 246 is a binding site for L-methionine. Lysine 277 serves as a coordination point for L-methionine.

Belongs to the AdoMet synthase family. In terms of assembly, homotetramer. Requires Mn(2+) as cofactor. Mg(2+) serves as cofactor. Co(2+) is required as a cofactor. The cofactor is K(+). As to expression, mostly expressed in flowers, seedpods and roots, and, to a lower extent, in stems and leaves.

The protein resides in the cytoplasm. The enzyme catalyses L-methionine + ATP + H2O = S-adenosyl-L-methionine + phosphate + diphosphate. It participates in amino-acid biosynthesis; S-adenosyl-L-methionine biosynthesis; S-adenosyl-L-methionine from L-methionine: step 1/1. In terms of biological role, catalyzes the formation of S-adenosylmethionine from methionine and ATP. The reaction comprises two steps that are both catalyzed by the same enzyme: formation of S-adenosylmethionine (AdoMet) and triphosphate, and subsequent hydrolysis of the triphosphate. The polypeptide is S-adenosylmethionine synthase 4 (MSAMS4) (Brassica juncea (Indian mustard)).